The primary structure comprises 261 residues: Acetylglutamate kinase (261 aa).

Residues 48 to 49 (GG), Arg-70, and Asn-164 each bind substrate.

The protein belongs to the acetylglutamate kinase family. ArgB subfamily.

It localises to the cytoplasm. It carries out the reaction N-acetyl-L-glutamate + ATP = N-acetyl-L-glutamyl 5-phosphate + ADP. It functions in the pathway amino-acid biosynthesis; L-arginine biosynthesis; N(2)-acetyl-L-ornithine from L-glutamate: step 2/4. Functionally, catalyzes the ATP-dependent phosphorylation of N-acetyl-L-glutamate. In Roseiflexus sp. (strain RS-1), this protein is Acetylglutamate kinase.